Consider the following 374-residue polypeptide: S-adenosylmethionine:tRNA ribosyltransferase-isomerase (374 aa).

Belongs to the QueA family. In terms of assembly, monomer.

It is found in the cytoplasm. The catalysed reaction is 7-aminomethyl-7-carbaguanosine(34) in tRNA + S-adenosyl-L-methionine = epoxyqueuosine(34) in tRNA + adenine + L-methionine + 2 H(+). Its pathway is tRNA modification; tRNA-queuosine biosynthesis. Functionally, transfers and isomerizes the ribose moiety from AdoMet to the 7-aminomethyl group of 7-deazaguanine (preQ1-tRNA) to give epoxyqueuosine (oQ-tRNA). In Prochlorococcus marinus (strain MIT 9215), this protein is S-adenosylmethionine:tRNA ribosyltransferase-isomerase.